Here is a 264-residue protein sequence, read N- to C-terminus: Methionine aminopeptidase (264 aa).

Position 79 (histidine 79) interacts with substrate. 3 residues coordinate a divalent metal cation: aspartate 97, aspartate 108, and histidine 171. Substrate is bound at residue histidine 178. Positions 204 and 235 each coordinate a divalent metal cation.

The protein belongs to the peptidase M24A family. Methionine aminopeptidase type 1 subfamily. In terms of assembly, monomer. It depends on Co(2+) as a cofactor. Requires Zn(2+) as cofactor. The cofactor is Mn(2+). Fe(2+) serves as cofactor.

It carries out the reaction Release of N-terminal amino acids, preferentially methionine, from peptides and arylamides.. Removes the N-terminal methionine from nascent proteins. The N-terminal methionine is often cleaved when the second residue in the primary sequence is small and uncharged (Met-Ala-, Cys, Gly, Pro, Ser, Thr, or Val). Requires deformylation of the N(alpha)-formylated initiator methionine before it can be hydrolyzed. This is Methionine aminopeptidase from Buchnera aphidicola subsp. Acyrthosiphon pisum (strain APS) (Acyrthosiphon pisum symbiotic bacterium).